The chain runs to 508 residues: Mitochondrial distribution and morphology protein 10 (508 aa).

The segment at 160–195 (PAHPTSTRPTPPQTPPSHTRQPSEPSTPAPSPTPGN) is disordered.

The protein belongs to the MDM10 family. Component of the ER-mitochondria encounter structure (ERMES) or MDM complex, composed of MMM1, MDM10, MDM12 and MDM34. Associates with the mitochondrial outer membrane sorting assembly machinery SAM(core) complex.

The protein resides in the mitochondrion outer membrane. In terms of biological role, component of the ERMES/MDM complex, which serves as a molecular tether to connect the endoplasmic reticulum and mitochondria. Components of this complex are involved in the control of mitochondrial shape and protein biogenesis and may function in phospholipid exchange. MDM10 is involved in the late assembly steps of the general translocase of the mitochondrial outer membrane (TOM complex). Functions in the TOM40-specific route of the assembly of outer membrane beta-barrel proteins, including the association of TOM40 with the receptor TOM22 and small TOM proteins. Can associate with the SAM(core) complex as well as the MDM12-MMM1 complex, both involved in late steps of the major beta-barrel assembly pathway, that is responsible for biogenesis of all outer membrane beta-barrel proteins. May act as a switch that shuttles between both complexes and channels precursor proteins into the TOM40-specific pathway. Plays a role in mitochondrial morphology and in the inheritance of mitochondria. The protein is Mitochondrial distribution and morphology protein 10 of Cryptococcus neoformans var. neoformans serotype D (strain JEC21 / ATCC MYA-565) (Filobasidiella neoformans).